The sequence spans 185 residues: Probable calcium-binding protein CML10 (185 aa).

The disordered stretch occupies residues 1–41 (MVKIKMPALFRRRSGSKSPPLPQADPASGGGSPAPTPEEEM). 4 EF-hand domains span residues 36–71 (TPEE…LGHA), 72–107 (ATDD…ASGD), 110–145 (AVEE…LGEK), and 146–181 (ATVQ…GGSF). Positions 49, 51, 53, 55, 60, 85, 87, 89, 96, 123, 125, 127, 129, 134, 159, 161, 163, and 170 each coordinate Ca(2+).

Potential calcium sensor. This chain is Probable calcium-binding protein CML10 (CML10), found in Oryza sativa subsp. japonica (Rice).